We begin with the raw amino-acid sequence, 535 residues long: CTP synthase (535 aa).

The interval 1 to 267 (MTKYIFVTGG…DQIVCDHLKL (267 aa)) is amidoligase domain. Ser13 contacts CTP. Ser13 contacts UTP. 14-19 (SLGKGI) is an ATP binding site. Tyr54 is an L-glutamine binding site. Asp71 contributes to the ATP binding site. 2 residues coordinate Mg(2+): Asp71 and Glu141. CTP contacts are provided by residues 148–150 (DIE), 188–193 (KTKPTQ), and Lys224. UTP contacts are provided by residues 188–193 (KTKPTQ) and Lys224. 240 to 242 (RDA) lines the ATP pocket. Residues 292 to 534 (KIALVGKYVE…VSASITNKES (243 aa)) enclose the Glutamine amidotransferase type-1 domain. Gly354 contacts L-glutamine. Residue Cys381 is the Nucleophile; for glutamine hydrolysis of the active site. Residues 382–385 (LGMQ), Glu405, and Arg462 contribute to the L-glutamine site. Residues His507 and Glu509 contribute to the active site.

Belongs to the CTP synthase family. As to quaternary structure, homotetramer.

It catalyses the reaction UTP + L-glutamine + ATP + H2O = CTP + L-glutamate + ADP + phosphate + 2 H(+). It carries out the reaction L-glutamine + H2O = L-glutamate + NH4(+). The catalysed reaction is UTP + NH4(+) + ATP = CTP + ADP + phosphate + 2 H(+). It participates in pyrimidine metabolism; CTP biosynthesis via de novo pathway; CTP from UDP: step 2/2. Allosterically activated by GTP, when glutamine is the substrate; GTP has no effect on the reaction when ammonia is the substrate. The allosteric effector GTP functions by stabilizing the protein conformation that binds the tetrahedral intermediate(s) formed during glutamine hydrolysis. Inhibited by the product CTP, via allosteric rather than competitive inhibition. Its function is as follows. Catalyzes the ATP-dependent amination of UTP to CTP with either L-glutamine or ammonia as the source of nitrogen. Regulates intracellular CTP levels through interactions with the four ribonucleotide triphosphates. The protein is CTP synthase of Bacillus mycoides (strain KBAB4) (Bacillus weihenstephanensis).